Reading from the N-terminus, the 86-residue chain is Protein Tat (86 aa).

The interaction with human CREBBP stretch occupies residues 1–24 (MDPVDPNQEPWNHPGSQPRTACNN). Residues 1-48 (MDPVDPNQEPWNHPGSQPRTACNNCYCKKCCYHCQLCFLKKGLGIYYG) form a transactivation region. Cys-22, Cys-25, and Cys-27 together coordinate Zn(2+). Residues 22 to 37 (CNNCYCKKCCYHCQLC) form a cysteine-rich region. Residue Lys-28 is modified to N6-acetyllysine; by host PCAF. Cys-30, His-33, Cys-34, and Cys-37 together coordinate Zn(2+). Residues 38 to 48 (FLKKGLGIYYG) are core. A compositionally biased stretch (basic residues) spans 48–58 (GRKKRRQRRGT). A disordered region spans residues 48 to 86 (GRKKRRQRRGTPKSLQDHQTLIPKQPLSRTSGDPTGPEK). Residues 49 to 57 (RKKRRQRRG) carry the Nuclear localization signal, RNA-binding (TAR), and protein transduction motif. The interaction with the host capping enzyme RNGTT stretch occupies residues 49-86 (RKKRRQRRGTPKSLQDHQTLIPKQPLSRTSGDPTGPEK). 2 positions are modified to N6-acetyllysine; by host EP300 and GCN5L2: Lys-50 and Lys-51. Arg-52 and Arg-53 each carry asymmetric dimethylarginine; by host PRMT6. Lys-71 is covalently cross-linked (Glycyl lysine isopeptide (Lys-Gly) (interchain with G-Cter in ubiquitin)).

The protein belongs to the lentiviruses Tat family. As to quaternary structure, interacts with host CCNT1. Associates with the P-TEFb complex composed at least of Tat, P-TEFb (CDK9 and CCNT1), TAR RNA, RNA Pol II. Recruits the HATs CREBBP, TAF1/TFIID, EP300, PCAF and GCN5L2. Interacts with host KAT5/Tip60; this interaction targets the latter to degradation. Interacts with the host deacetylase SIRT1. Interacts with host capping enzyme RNGTT; this interaction stimulates RNGTT. Binds to host KDR, and to the host integrins ITGAV/ITGB3 and ITGA5/ITGB1. Interacts with host KPNB1/importin beta-1 without previous binding to KPNA1/importin alpha-1. Interacts with EIF2AK2. Interacts with host nucleosome assembly protein NAP1L1; this interaction may be required for the transport of Tat within the nucleus, since the two proteins interact at the nuclear rim. Interacts with host C1QBP/SF2P32; this interaction involves lysine-acetylated Tat. Interacts with the host chemokine receptors CCR2, CCR3 and CXCR4. Interacts with host DPP4/CD26; this interaction may trigger an anti-proliferative effect. Interacts with host LDLR. Interacts with the host extracellular matrix metalloproteinase MMP1. Interacts with host PRMT6; this interaction mediates Tat's methylation. Interacts with, and is ubiquitinated by MDM2/Hdm2. Interacts with host PSMC3 and HTATIP2. Interacts with STAB1; this interaction may overcome SATB1-mediated repression of IL2 and IL2RA (interleukin) in T cells by binding to the same domain than HDAC1. Interacts (when acetylated) with human CDK13, thereby increasing HIV-1 mRNA splicing and promoting the production of the doubly spliced HIV-1 protein Nef. Interacts with host TBP; this interaction modulates the activity of transcriptional pre-initiation complex. Interacts with host RELA. Interacts with host PLSCR1; this interaction negatively regulates Tat transactivation activity by altering its subcellular distribution. Asymmetrical arginine methylation by host PRMT6 seems to diminish the transactivation capacity of Tat and affects the interaction with host CCNT1. In terms of processing, acetylation by EP300, CREBBP, GCN5L2/GCN5 and PCAF regulates the transactivation activity of Tat. EP300-mediated acetylation of Lys-50 promotes dissociation of Tat from the TAR RNA through the competitive binding to PCAF's bromodomain. In addition, the non-acetylated Tat's N-terminus can also interact with PCAF. PCAF-mediated acetylation of Lys-28 enhances Tat's binding to CCNT1. Lys-50 is deacetylated by SIRT1. Post-translationally, polyubiquitination by host MDM2 does not target Tat to degradation, but activates its transactivation function and fosters interaction with CCNT1 and TAR RNA. Phosphorylated by EIF2AK2 on serine and threonine residues adjacent to the basic region important for TAR RNA binding and function. Phosphorylation of Tat by EIF2AK2 is dependent on the prior activation of EIF2AK2 by dsRNA.

The protein localises to the host nucleus. The protein resides in the host nucleolus. It is found in the host cytoplasm. Its subcellular location is the secreted. Its function is as follows. Transcriptional activator that increases RNA Pol II processivity, thereby increasing the level of full-length viral transcripts. Recognizes a hairpin structure at the 5'-LTR of the nascent viral mRNAs referred to as the transactivation responsive RNA element (TAR) and recruits the cyclin T1-CDK9 complex (P-TEFb complex) that will in turn hyperphosphorylate the RNA polymerase II to allow efficient elongation. The CDK9 component of P-TEFb and other Tat-activated kinases hyperphosphorylate the C-terminus of RNA Pol II that becomes stabilized and much more processive. Other factors such as HTATSF1/Tat-SF1, SUPT5H/SPT5, and HTATIP2 are also important for Tat's function. Besides its effect on RNA Pol II processivity, Tat induces chromatin remodeling of proviral genes by recruiting the histone acetyltransferases (HATs) CREBBP, EP300 and PCAF to the chromatin. This also contributes to the increase in proviral transcription rate, especially when the provirus integrates in transcriptionally silent region of the host genome. To ensure maximal activation of the LTR, Tat mediates nuclear translocation of NF-kappa-B by interacting with host RELA. Through its interaction with host TBP, Tat may also modulate transcription initiation. Tat can reactivate a latently infected cell by penetrating in it and transactivating its LTR promoter. In the cytoplasm, Tat is thought to act as a translational activator of HIV-1 mRNAs. Functionally, extracellular circulating Tat can be endocytosed by surrounding uninfected cells via the binding to several surface receptors such as CD26, CXCR4, heparan sulfate proteoglycans (HSPG) or LDLR. Neurons are rarely infected, but they internalize Tat via their LDLR. Through its interaction with nuclear HATs, Tat is potentially able to control the acetylation-dependent cellular gene expression. Modulates the expression of many cellular genes involved in cell survival, proliferation or in coding for cytokines or cytokine receptors. Tat plays a role in T-cell and neurons apoptosis. Tat induced neurotoxicity and apoptosis probably contribute to neuroAIDS. Circulating Tat also acts as a chemokine-like and/or growth factor-like molecule that binds to specific receptors on the surface of the cells, affecting many cellular pathways. In the vascular system, Tat binds to ITGAV/ITGB3 and ITGA5/ITGB1 integrins dimers at the surface of endothelial cells and competes with bFGF for heparin-binding sites, leading to an excess of soluble bFGF. The polypeptide is Protein Tat (Human immunodeficiency virus type 1 group M subtype H (isolate VI991) (HIV-1)).